The sequence spans 134 residues: UPF0412 protein YaaI (134 aa).

An N-terminal signal peptide occupies residues Met1–Ala23.

Belongs to the UPF0412 family.

This chain is UPF0412 protein YaaI, found in Escherichia coli (strain ATCC 8739 / DSM 1576 / NBRC 3972 / NCIMB 8545 / WDCM 00012 / Crooks).